The chain runs to 229 residues: Ribosome maturation factor RimM (229 aa).

A disordered region spans residues 1–21 (MAGHDSGNAKRGRSPSFGVFV). Residues 148 to 229 (ADEFYWVDLI…RVVVDWEADY (82 aa)) enclose the PRC barrel domain.

This sequence belongs to the RimM family. In terms of assembly, binds ribosomal protein uS19.

It is found in the cytoplasm. Functionally, an accessory protein needed during the final step in the assembly of 30S ribosomal subunit, possibly for assembly of the head region. Essential for efficient processing of 16S rRNA. May be needed both before and after RbfA during the maturation of 16S rRNA. It has affinity for free ribosomal 30S subunits but not for 70S ribosomes. The polypeptide is Ribosome maturation factor RimM (Burkholderia mallei (strain NCTC 10247)).